The primary structure comprises 124 residues: Protein YebF (124 aa).

The first 27 residues, 1–27, serve as a signal peptide directing secretion; sequence MKTCHIINRVGLSGVALLLTVSFTVSA. The YebF/Cmi domain maps to 36-123; sequence KFISCDNLTK…QQNTISYSEL (88 aa). Cys40 and Cys113 are disulfide-bonded.

It belongs to the YebF family.

It localises to the secreted. The protein is Protein YebF of Photorhabdus laumondii subsp. laumondii (strain DSM 15139 / CIP 105565 / TT01) (Photorhabdus luminescens subsp. laumondii).